A 558-amino-acid chain; its full sequence is Cytochrome P450 monooxygenase sdnT (558 aa).

The chain crosses the membrane as a helical span at residues 21–41; sequence IISLTTCFVCAFAVSFVALAI. Residues 298-317 are disordered; it reads QNAGSNTRPKPPKRKQDTQP. N-linked (GlcNAc...) asparagine glycosylation is found at Asn-464 and Asn-495. Heme is bound at residue Cys-505.

Belongs to the cytochrome P450 family. Heme serves as cofactor.

Its subcellular location is the membrane. Its pathway is antibiotic biosynthesis. Functionally, cytochrome P450 monooxygenase; part of the gene cluster that mediates the biosynthesis of sordarin and hypoxysordarin, glycoside antibiotics with a unique tetracyclic diterpene aglycone structure. First, the geranylgeranyl diphosphate synthase sdnC constructs GGDP from farnesyl diphosphate and isopentenyl diphosphate. The diterpene cyclase sdnA then catalyzes the cyclization of GGDP to afford cycloaraneosene. Cycloaraneosene is then hydroxylated four times by the putative cytochrome P450 monooxygenases sdnB, sdnE, sdnF and sdnH to give a hydroxylated cycloaraneosene derivative such as cycloaraneosene-8,9,13,19-tetraol. Although the order of the hydroxylations is unclear, at least C8, C9 and C13 of the cycloaraneosene skeleton are hydroxylated before the sordaricin formation. Dehydration of the 13-hydroxy group of the hydroxylated cycloaraneosene derivative might be catalyzed by an unassigned hypothetical protein such as sdnG and sdnP to construct the cyclopentadiene moiety. The FAD-dependent oxidoreductase sdnN is proposed to catalyze the oxidation at C9 of the hydroxylated cycloaraneosene derivative and also catalyze the Baeyer-Villiger oxidation to give the lactone intermediate. The presumed lactone intermediate would be hydrolyzed to give an acrolein moiety and a carboxylate moiety. Then, [4+2]cycloaddition would occur between the acrolein moiety and the cyclopentadiene moiety to give sordaricin. SdnN might also be involved in the [4+2]cycloaddition after the hypothesized oxidation to accommodate the oxidized product and prompt the [4+2]cycloaddition. GDP-6-deoxy-D-altrose may be biosynthesized from GDP-D-mannose by the putative GDP-mannose-4,6-dehydratase sdnI and the short-chain dehydrogenase sdnK. The glycosyltransferase sdnJ catalyzes the attachment of 6-deoxy-D-altrose onto the 19-hydroxy group of sordaricin to give 4'-O-demethylsordarin. The methyltransferase sdnD would complete the biosynthesis of sordarin. Sordarin can be further modified into hypoxysordarin. The unique acyl chain at the 3'-hydroxy group of hypoxysordarin would be constructed by an iterative type I PKS sdnO and the trans-acting polyketide methyltransferase sdnL. SdnL would be responsible for the introduction of an alpha-methyl group of the polyketide chain. Alternatively, the beta-lactamase-like protein sdnR might be responsible for the cleavage and transfer of the polyketide chain from the PKS sdnO to sordarin. Two putative cytochrome P450 monooxygenases, sdnQ and sdnT, might catalyze the epoxidations of the polyketide chain to complete the biosynthesis of hypoxysordarin. Transcriptional regulators sdnM and sdnS are presumably encoded for the transcriptional regulation of the expression of the sdn gene cluster. The protein is Cytochrome P450 monooxygenase sdnT of Sordaria araneosa (Pleurage araneosa).